The sequence spans 363 residues: Cobalt-precorrin-5B C(1)-methyltransferase (363 aa).

It belongs to the CbiD family.

The enzyme catalyses Co-precorrin-5B + S-adenosyl-L-methionine = Co-precorrin-6A + S-adenosyl-L-homocysteine. It functions in the pathway cofactor biosynthesis; adenosylcobalamin biosynthesis; cob(II)yrinate a,c-diamide from sirohydrochlorin (anaerobic route): step 6/10. Functionally, catalyzes the methylation of C-1 in cobalt-precorrin-5B to form cobalt-precorrin-6A. The protein is Cobalt-precorrin-5B C(1)-methyltransferase of Burkholderia mallei (strain ATCC 23344).